Here is a 300-residue protein sequence, read N- to C-terminus: Ornithine carbamoyltransferase (300 aa).

Carbamoyl phosphate is bound by residues 51 to 54, Q78, R102, and 129 to 132; these read STRT and HPCQ. L-ornithine-binding positions include N160, D217, and 221–222; that span reads SM. Residues 257–258 and R285 each bind carbamoyl phosphate; that span reads CL.

Belongs to the aspartate/ornithine carbamoyltransferase superfamily. OTCase family.

The protein localises to the cytoplasm. The catalysed reaction is carbamoyl phosphate + L-ornithine = L-citrulline + phosphate + H(+). The protein operates within amino-acid biosynthesis; L-arginine biosynthesis; L-arginine from L-ornithine and carbamoyl phosphate: step 1/3. Its function is as follows. Reversibly catalyzes the transfer of the carbamoyl group from carbamoyl phosphate (CP) to the N(epsilon) atom of ornithine (ORN) to produce L-citrulline. This chain is Ornithine carbamoyltransferase, found in Halorhodospira halophila (strain DSM 244 / SL1) (Ectothiorhodospira halophila (strain DSM 244 / SL1)).